The following is a 248-amino-acid chain: Triosephosphate isomerase (248 aa).

The substrate site is built by asparagine 11 and lysine 13. Catalysis depends on histidine 95, which acts as the Electrophile. Glutamate 165 acts as the Proton acceptor in catalysis.

The protein belongs to the triosephosphate isomerase family. Homodimer.

It is found in the cytoplasm. The enzyme catalyses dihydroxyacetone phosphate = methylglyoxal + phosphate. It catalyses the reaction D-glyceraldehyde 3-phosphate = dihydroxyacetone phosphate. It participates in carbohydrate degradation; glycolysis; D-glyceraldehyde 3-phosphate from glycerone phosphate: step 1/1. The protein operates within carbohydrate biosynthesis; gluconeogenesis. Its function is as follows. Triosephosphate isomerase is an extremely efficient metabolic enzyme that catalyzes the interconversion between dihydroxyacetone phosphate (DHAP) and D-glyceraldehyde-3-phosphate (G3P) in glycolysis and gluconeogenesis. In terms of biological role, it is also responsible for the non-negligible production of methylglyoxal a reactive cytotoxic side-product that modifies and can alter proteins, DNA and lipids. The chain is Triosephosphate isomerase (tpi1) from Xenopus laevis (African clawed frog).